The chain runs to 130 residues: Small ribosomal subunit protein uS9 (130 aa).

The interval 98-130 (LKKAGMLTRDPRMKERKKYGLKKARKASQFSKR) is disordered. The segment covering 111–130 (KERKKYGLKKARKASQFSKR) has biased composition (basic residues).

Belongs to the universal ribosomal protein uS9 family.

The chain is Small ribosomal subunit protein uS9 from Lacticaseibacillus casei (strain BL23) (Lactobacillus casei).